The sequence spans 547 residues: Putative cysteine ligase BshC (547 aa).

The stretch at 461–504 (ASTEATRSAIMDEMEALKQKVVRAEKRQQDEVRAQLKKAHTNLR) forms a coiled coil.

It belongs to the BshC family.

The chain is Putative cysteine ligase BshC from Salinibacter ruber (strain DSM 13855 / M31).